Here is a 734-residue protein sequence, read N- to C-terminus: Photosystem I P700 chlorophyll a apoprotein A2 (734 aa).

8 helical membrane passes run 46-69 (IFAS…FHVA), 135-158 (LYTG…LHLQ), 175-199 (LNHH…HVAI), 273-291 (MAHH…GHMY), 330-353 (LHFQ…QHMY), 369-395 (SALY…IFFI), 417-439 (ALIS…LYVH), and 517-535 (FLVH…LILV). Residues C559 and C568 each contribute to the [4Fe-4S] cluster site. The next 2 helical transmembrane spans lie at 575–596 (AFYL…YWHW) and 643–665 (LSVW…MFLI). Residues H654, M662, and Y670 each contribute to the chlorophyll a site. W671 contacts phylloquinone. The chain crosses the membrane as a helical span at residues 707 to 727 (LVGLAHFSVGYVFTYAAFVIA).

Belongs to the PsaA/PsaB family. In terms of assembly, the PsaA/B heterodimer binds the P700 chlorophyll special pair and subsequent electron acceptors. PSI consists of a core antenna complex that captures photons, and an electron transfer chain that converts photonic excitation into a charge separation. The eukaryotic PSI reaction center is composed of at least 11 subunits. Requires P700 is a chlorophyll a/chlorophyll a' dimer, A0 is one or more chlorophyll a, A1 is one or both phylloquinones and FX is a shared 4Fe-4S iron-sulfur center. as cofactor.

It is found in the plastid. The protein resides in the chloroplast thylakoid membrane. It catalyses the reaction reduced [plastocyanin] + hnu + oxidized [2Fe-2S]-[ferredoxin] = oxidized [plastocyanin] + reduced [2Fe-2S]-[ferredoxin]. Functionally, psaA and PsaB bind P700, the primary electron donor of photosystem I (PSI), as well as the electron acceptors A0, A1 and FX. PSI is a plastocyanin/cytochrome c6-ferredoxin oxidoreductase, converting photonic excitation into a charge separation, which transfers an electron from the donor P700 chlorophyll pair to the spectroscopically characterized acceptors A0, A1, FX, FA and FB in turn. Oxidized P700 is reduced on the lumenal side of the thylakoid membrane by plastocyanin or cytochrome c6. In Nephroselmis olivacea (Green alga), this protein is Photosystem I P700 chlorophyll a apoprotein A2.